The following is a 188-amino-acid chain: Peptidyl-tRNA hydrolase (188 aa).

Tyr-14 is a binding site for tRNA. Residue His-19 is the Proton acceptor of the active site. TRNA-binding residues include Tyr-64, Asn-66, and Asn-112.

This sequence belongs to the PTH family. In terms of assembly, monomer.

It is found in the cytoplasm. It catalyses the reaction an N-acyl-L-alpha-aminoacyl-tRNA + H2O = an N-acyl-L-amino acid + a tRNA + H(+). Its function is as follows. Hydrolyzes ribosome-free peptidyl-tRNAs (with 1 or more amino acids incorporated), which drop off the ribosome during protein synthesis, or as a result of ribosome stalling. In terms of biological role, catalyzes the release of premature peptidyl moieties from peptidyl-tRNA molecules trapped in stalled 50S ribosomal subunits, and thus maintains levels of free tRNAs and 50S ribosomes. The polypeptide is Peptidyl-tRNA hydrolase (Bacillus velezensis (strain DSM 23117 / BGSC 10A6 / LMG 26770 / FZB42) (Bacillus amyloliquefaciens subsp. plantarum)).